We begin with the raw amino-acid sequence, 502 residues long: Aspartyl/glutamyl-tRNA(Asn/Gln) amidotransferase subunit B (502 aa).

Belongs to the GatB/GatE family. GatB subfamily. In terms of assembly, heterotrimer of A, B and C subunits.

It catalyses the reaction L-glutamyl-tRNA(Gln) + L-glutamine + ATP + H2O = L-glutaminyl-tRNA(Gln) + L-glutamate + ADP + phosphate + H(+). It carries out the reaction L-aspartyl-tRNA(Asn) + L-glutamine + ATP + H2O = L-asparaginyl-tRNA(Asn) + L-glutamate + ADP + phosphate + 2 H(+). Functionally, allows the formation of correctly charged Asn-tRNA(Asn) or Gln-tRNA(Gln) through the transamidation of misacylated Asp-tRNA(Asn) or Glu-tRNA(Gln) in organisms which lack either or both of asparaginyl-tRNA or glutaminyl-tRNA synthetases. The reaction takes place in the presence of glutamine and ATP through an activated phospho-Asp-tRNA(Asn) or phospho-Glu-tRNA(Gln). This chain is Aspartyl/glutamyl-tRNA(Asn/Gln) amidotransferase subunit B, found in Brucella suis (strain ATCC 23445 / NCTC 10510).